We begin with the raw amino-acid sequence, 345 residues long: Probable dual-specificity RNA methyltransferase RlmN (345 aa).

Residue Glu90 is the Proton acceptor of the active site. The region spanning 96–326 (YDYGNSICIS…STIRKEMGAD (231 aa)) is the Radical SAM core domain. Cys103 and Cys331 form a disulfide bridge. Positions 110, 114, and 117 each coordinate [4Fe-4S] cluster. S-adenosyl-L-methionine is bound by residues 157–158 (GE), Ser189, 212–214 (SLH), and Asn288. The S-methylcysteine intermediate role is filled by Cys331.

This sequence belongs to the radical SAM superfamily. RlmN family. The cofactor is [4Fe-4S] cluster.

The protein localises to the cytoplasm. The catalysed reaction is adenosine(2503) in 23S rRNA + 2 reduced [2Fe-2S]-[ferredoxin] + 2 S-adenosyl-L-methionine = 2-methyladenosine(2503) in 23S rRNA + 5'-deoxyadenosine + L-methionine + 2 oxidized [2Fe-2S]-[ferredoxin] + S-adenosyl-L-homocysteine. It carries out the reaction adenosine(37) in tRNA + 2 reduced [2Fe-2S]-[ferredoxin] + 2 S-adenosyl-L-methionine = 2-methyladenosine(37) in tRNA + 5'-deoxyadenosine + L-methionine + 2 oxidized [2Fe-2S]-[ferredoxin] + S-adenosyl-L-homocysteine. Functionally, specifically methylates position 2 of adenine 2503 in 23S rRNA and position 2 of adenine 37 in tRNAs. The sequence is that of Probable dual-specificity RNA methyltransferase RlmN from Clostridium acetobutylicum (strain ATCC 824 / DSM 792 / JCM 1419 / IAM 19013 / LMG 5710 / NBRC 13948 / NRRL B-527 / VKM B-1787 / 2291 / W).